We begin with the raw amino-acid sequence, 264 residues long: Thymidylate synthase (264 aa).

Arg21 serves as a coordination point for dUMP. His51 lines the (6R)-5,10-methylene-5,6,7,8-tetrahydrofolate pocket. Position 126–127 (126–127 (RR)) interacts with dUMP. Residue Cys146 is the Nucleophile of the active site. DUMP-binding positions include 166–169 (RSAD), Asn177, and 207–209 (HLY). Asp169 lines the (6R)-5,10-methylene-5,6,7,8-tetrahydrofolate pocket. (6R)-5,10-methylene-5,6,7,8-tetrahydrofolate is bound at residue Ala263.

Belongs to the thymidylate synthase family. Bacterial-type ThyA subfamily. In terms of assembly, homodimer.

Its subcellular location is the cytoplasm. The catalysed reaction is dUMP + (6R)-5,10-methylene-5,6,7,8-tetrahydrofolate = 7,8-dihydrofolate + dTMP. It participates in pyrimidine metabolism; dTTP biosynthesis. Functionally, catalyzes the reductive methylation of 2'-deoxyuridine-5'-monophosphate (dUMP) to 2'-deoxythymidine-5'-monophosphate (dTMP) while utilizing 5,10-methylenetetrahydrofolate (mTHF) as the methyl donor and reductant in the reaction, yielding dihydrofolate (DHF) as a by-product. This enzymatic reaction provides an intracellular de novo source of dTMP, an essential precursor for DNA biosynthesis. The protein is Thymidylate synthase of Legionella pneumophila (strain Lens).